The primary structure comprises 238 residues: UPF0328 protein ECU07_0010 (238 aa).

Disordered stretches follow at residues 1-154 and 211-238; these read MAAP…NTQR and GRLH…LATL. Residues 106 to 128 show a composition bias toward basic and acidic residues; the sequence is HTEGCHTHEANPEPNTKHTETES. Residues 129-152 are compositionally biased toward polar residues; that stretch reads PKPQTSTQHHTPITIPSSLLSQNT.

This sequence belongs to the UPF0328 family.

This chain is UPF0328 protein ECU07_0010, found in Encephalitozoon cuniculi (strain GB-M1) (Microsporidian parasite).